We begin with the raw amino-acid sequence, 253 residues long: 5'/3'-nucleotidase SurE (253 aa).

A divalent metal cation contacts are provided by Asp8, Asp9, Ser39, and Asn92.

This sequence belongs to the SurE nucleotidase family. It depends on a divalent metal cation as a cofactor.

The protein localises to the cytoplasm. It carries out the reaction a ribonucleoside 5'-phosphate + H2O = a ribonucleoside + phosphate. It catalyses the reaction a ribonucleoside 3'-phosphate + H2O = a ribonucleoside + phosphate. The enzyme catalyses [phosphate](n) + H2O = [phosphate](n-1) + phosphate + H(+). Its function is as follows. Nucleotidase with a broad substrate specificity as it can dephosphorylate various ribo- and deoxyribonucleoside 5'-monophosphates and ribonucleoside 3'-monophosphates with highest affinity to 3'-AMP. Also hydrolyzes polyphosphate (exopolyphosphatase activity) with the preference for short-chain-length substrates (P20-25). Might be involved in the regulation of dNTP and NTP pools, and in the turnover of 3'-mononucleotides produced by numerous intracellular RNases (T1, T2, and F) during the degradation of various RNAs. The chain is 5'/3'-nucleotidase SurE from Sodalis glossinidius (strain morsitans).